Here is a 61-residue protein sequence, read N- to C-terminus: Large ribosomal subunit protein uL30 (61 aa).

The protein belongs to the universal ribosomal protein uL30 family. Part of the 50S ribosomal subunit.

In Corynebacterium jeikeium (strain K411), this protein is Large ribosomal subunit protein uL30.